The chain runs to 291 residues: uncharacterized protein (291 aa).

Solcar repeat units follow at residues Pro15–Ser93, Pro104–Ser190, and Leu201–Ile287. The next 6 helical transmembrane spans lie at Ile21–Ala41, Ser70–Ile90, Leu108–Ile128, Thr169–Gln189, Leu201–Thr221, and Phe259–Val280.

The protein belongs to the mitochondrial carrier (TC 2.A.29) family.

Its subcellular location is the mitochondrion inner membrane. This is an uncharacterized protein from Schizosaccharomyces pombe (strain 972 / ATCC 24843) (Fission yeast).